The following is a 339-amino-acid chain: Probable protein phosphatase 2C 28 (339 aa).

The PPM-type phosphatase domain occupies 87–334 (DHGYHLVKGQ…DDISCVVVSF (248 aa)). Mn(2+)-binding residues include Asp124, Gly125, Asp286, and Asp325.

It belongs to the PP2C family. Mg(2+) serves as cofactor. It depends on Mn(2+) as a cofactor.

It carries out the reaction O-phospho-L-seryl-[protein] + H2O = L-seryl-[protein] + phosphate. It catalyses the reaction O-phospho-L-threonyl-[protein] + H2O = L-threonyl-[protein] + phosphate. The sequence is that of Probable protein phosphatase 2C 28 from Arabidopsis thaliana (Mouse-ear cress).